The primary structure comprises 403 residues: Guanine nucleotide-binding protein alpha-8 subunit (403 aa).

Gly-2 is lipidated: N-myristoyl glycine. The S-palmitoyl cysteine moiety is linked to residue Cys-3. Positions 31–356 constitute a G-alpha domain; the sequence is LDFRILLLGA…KVLMKATKDL (326 aa). The G1 motif stretch occupies residues 34-47; sequence RILLLGAGESGKST. GTP is bound by residues 39–46, 174–180, 199–203, 268–271, and Ala-324; these read GAGESGKS, IMTRVRT, DVGGQ, and NKKD. Mg(2+)-binding residues include Ser-46 and Thr-180. A G2 motif region spans residues 172 to 180; it reads DCIMTRVRT. The tract at residues 195 to 204 is G3 motif; the sequence is FRVVDVGGQR. The segment at 264–271 is G4 motif; sequence FLVLNKKD. The G5 motif stretch occupies residues 322–327; that stretch reads IAARYK. Residues 353 to 403 are disordered; the sequence is TKDLKKSSKQSSKSSLGNSTQNNSNNNNNNNNSNNNNGQTTIDGATAKINS. Positions 374 to 389 are enriched in low complexity; sequence NNSNNNNNNNNSNNNN. Residues 390-403 are compositionally biased toward polar residues; sequence GQTTIDGATAKINS.

The protein belongs to the G-alpha family. As to quaternary structure, g proteins are composed of 3 units; alpha, beta and gamma. The alpha chain contains the guanine nucleotide binding site.

Its function is as follows. Guanine nucleotide-binding proteins (G proteins) are involved as modulators or transducers in various transmembrane signaling systems. G alpha-8 is a potential analog for the G(s)-like G-proteins which stimulate adenylate cyclase in mammals. This chain is Guanine nucleotide-binding protein alpha-8 subunit (gpaH), found in Dictyostelium discoideum (Social amoeba).